The following is a 490-amino-acid chain: 5'-3' exonuclease PLD3 (490 aa).

Topologically, residues 1–38 are cytoplasmic; the sequence is MKPKLMYQELKVPAEEPANELPMNEIEAWKAAEKKARW. Residues 39–59 form a helical; Signal-anchor for type II membrane protein membrane-spanning segment; the sequence is VLLVLILAVVGFGALMTQLFL. The Lumenal segment spans residues 60-490; sequence WEYGDLHLFG…DSVGNACRLL (431 aa). Intrachain disulfides connect Cys-77/Cys-239 and Cys-81/Cys-237. N-linked (GlcNAc...) asparagine glycans are attached at residues Asn-97 and Asn-132. Positions 196–223 constitute a PLD phosphodiesterase 1 domain; sequence THGVLHTKFWVVDQTHFYLGSANMDWRS. Active-site residues include His-201, Lys-203, and Asp-208. The active-site Proton donor is the His-201. 2 residues coordinate phosphate: His-201 and Lys-203. Asn-218 contributes to the phosphate binding site. 3 N-linked (GlcNAc...) asparagine glycosylation sites follow: Asn-236, Asn-284, and Asn-387. Cys-366 and Cys-487 are disulfide-bonded. The PLD phosphodiesterase 2 domain maps to 411-437; that stretch reads YARVNHNKYMVTERATYIGTSNWSGNY. Residue His-416 coordinates phosphate. The Nucleophile role is filled by His-416. Mg(2+) is bound at residue Phe-438.

It belongs to the phospholipase D family. As to quaternary structure, homodimer. Interacts with APP. Post-translationally, N-glycosylated. Proteolytically processed to a soluble form that is stable within endosomes and lysosomes. During transport through the secretory pathway becomes proteolysed by cysteine proteases, thereby releasing a stable soluble lysosomal lumenal polypeptide, whereas the transmembrane-bound fragment is rapidly degraded. Its transport route to lysosomes involves ubiquitination and the ESCRT complex. In terms of processing, ubiquitinated. Ubiquitination mediates sorting into lysosomes.

The protein localises to the endoplasmic reticulum membrane. Its subcellular location is the lysosome lumen. It localises to the early endosome membrane. It is found in the late endosome membrane. The protein resides in the golgi apparatus membrane. The protein localises to the endosome membrane. It carries out the reaction Exonucleolytic cleavage in the 5'- to 3'-direction to yield nucleoside 3'-phosphates.. The catalysed reaction is a 5'-end 5'-dephospho-ribonucleotidyl-ribonucleotide-RNA + H2O = a ribonucleoside 3'-phosphate + a 5'-end dephospho-ribonucleoside-RNA + H(+). It catalyses the reaction a ribonucleoside 3'-phosphate-2'-3'-cyclophospho-GMP + H2O = a ribonucleoside 3'-phosphate + 2',3'-cyclophospho-GMP + H(+). The enzyme catalyses a 5'-end 5'-dephospho-2'-deoxyribonucleotidyl-2'-deoxyribonucleotide in single-stranded DNA + H2O = a 5'-end dephospho-2'-deoxyribonucleoside in single-stranded DNA + a 2'-deoxyribonucleoside 3'-phosphate + H(+). It carries out the reaction a 5'-end 5'-phospho-2'-deoxyribonucleotide in single-stranded DNA + H2O = a 5'-end 5'-dephospho-2'-deoxyribonucleotide in single-stranded DNA + phosphate. The catalysed reaction is a 3-lyso-sn-glycero-1-phospho-(3'-acyl-1'-sn-glycerol) + a 1-acyl-sn-glycerol = a 3-acyl-sn-glycero-1-phospho-(3'-acyl-1'-sn-glycerol) + glycerol. It catalyses the reaction 3-lyso-sn-glycero-1-phospho-(3'-(9Z-octadecenoyl)-1'-sn-glycerol) + 1-(9Z-octadecenoyl)-sn-glycerol = 3-(9Z-octadecenoyl)-sn-glycero-1-phospho-(3'-(9Z-octadecenoyl)-1'-sn-glycerol) + glycerol. Functionally, 5'-&gt;3' exonuclease that hydrolyzes the phosphodiester bond of single-stranded DNA (ssDNA) and RNA molecules to form nucleoside 3'-monophosphates and 5'-end 5'-hydroxy deoxyribonucleotide/ribonucleotide fragments. Partially redundant with PLD4, can cleave all four nucleotides displaying higher efficiency for ssDNA and RNA fragments initiated with uridine and guanosine residues and lower efficiency for cytidine-initiated substrates. As a result, it does not always degrade polynucleotides to the single nucleotide level, it can stall at specific sites sparing certain fragments from exonucleolytic degradation. Processes self and pathogenic ssDNA and RNA molecules that reach the endolysosomal compartment via phagocytosis or autophagy and may serve as 'danger' signals for recognition by innate immune receptors such as toll-like receptors (TLRs). Degrades mitochondrial CpG-rich ssDNA fragments to prevent TLR9 activation and autoinflammatory response, but it can cleave viral RNA to generate ligands for TLR7 activation and initiate antiviral immune responses. In plasmacytoid dendritic cells, it cooperates with endonuclease RNASET2 to release 2',3'-cyclic guanosine monophosphate (2',3'-cGMP), a potent stimulatory ligand for TLR7. Produces 2',3'-cGMPs and cytidine-rich RNA fragments that occupy TLR7 ligand-binding pockets and trigger a signaling-competent state. Can exert polynucleotide phosphatase activity toward 5'-phosphorylated ssDNA substrates although at a slow rate. Transphosphatidylase that catalyzes the exchange with R to S stereo-inversion of the glycerol moiety between (S,R)-lysophosphatidylglycerol (LPG) and monoacylglycerol (MAG) substrates to yield (S,S)-bis(monoacylglycero)phosphate (BMP). Can synthesize a variety of (S,S)-BMPs representing the main phospholipid constituent of lysosomal intralumenal vesicle (ILV) membranes that bind acid hydrolases for lipid degradation. Regulates the homeostasis and interorganellar communication of the endolysosomal system with an overall impact on cellular removal of dysfunctional organelles via autophagy as well as proper protein and lipid turnover. May play a role in myotube formation in response to ER stress. This chain is 5'-3' exonuclease PLD3 (PLD3), found in Macaca fascicularis (Crab-eating macaque).